We begin with the raw amino-acid sequence, 504 residues long: MEKFQGYLEFDGARQQSFLYPLFFREYIYVLAYDHGLNRLNRNRSILFENVDYEKKYSSLIVKRLILRMYEQNRLIIPTKNLNQNYFFGHTSLFYYQMISVLFAVIVEIPFSLRLGSSFEGKQLKKSYNLQSIHSIFPFLEDKLSHFNYVLDVVIPYPIHLEILVQTLRYRVKDASSLHFFRFCLYEYCNWKDFSIKKKSILNPRFFLFLYNSHVCEYESIFFFLRKRSSHLRSTSYEVLFERILFYGKIQHFFKVFVKNFPAILGLLKDPLIHYVRYHGRCILATKDTPLLMNKWKYYFVNLWQCYFSVWFQSQKVNINQLSKDNLEFLGYLSSLRLNPLVVRSQMLENSFLIDNVRIKLDSKIPISSIIGSLAKDKFCNVLGHPISKAVWTDSSDSDILNRFVRISRNISHYYSGSSKKKNLYRIKYILRLCCVKTLARKHKSTVRAFLKRLGSGLLEEFLTGEDQVLSLIFPRSYYASKRLYRVRIWYLDILYLNDLVNHE.

It belongs to the intron maturase 2 family. MatK subfamily.

Its subcellular location is the plastid. It is found in the chloroplast. Usually encoded in the trnK tRNA gene intron. Probably assists in splicing its own and other chloroplast group II introns. This chain is Maturase K, found in Barbarea vulgaris (Yellow rocket).